The sequence spans 313 residues: Acetaldehyde dehydrogenase (313 aa).

Residue 12-15 (SGNI) participates in NAD(+) binding. The active-site Acyl-thioester intermediate is the Cys-132. NAD(+) contacts are provided by residues 163–171 (SAGPGTRAN) and Asn-291.

This sequence belongs to the acetaldehyde dehydrogenase family.

It carries out the reaction acetaldehyde + NAD(+) + CoA = acetyl-CoA + NADH + H(+). The polypeptide is Acetaldehyde dehydrogenase (bphG) (Burkholderia cepacia (Pseudomonas cepacia)).